Reading from the N-terminus, the 134-residue chain is Small ribosomal subunit protein uS11 (134 aa).

The protein belongs to the universal ribosomal protein uS11 family. Part of the 30S ribosomal subunit. Interacts with proteins S7 and S18. Binds to IF-3.

Located on the platform of the 30S subunit, it bridges several disparate RNA helices of the 16S rRNA. Forms part of the Shine-Dalgarno cleft in the 70S ribosome. This Corynebacterium jeikeium (strain K411) protein is Small ribosomal subunit protein uS11.